The primary structure comprises 1026 residues: Multidrug resistance protein MdtC (1026 aa).

The Cytoplasmic segment spans residues 1-6; sequence MRFFAL. Residues 7–29 traverse the membrane as a helical segment; it reads FIYRPVATILIAAAITLCGILGF. The Periplasmic portion of the chain corresponds to 30-335; that stretch reads RLLPVAPLPQ…TIRASLQEVE (306 aa). Residues 336–353 traverse the membrane as a helical segment; it reads ETLAISVALVILVVFLFL. Residues 354–359 lie on the Cytoplasmic side of the membrane; that stretch reads RSGRAT. The helical transmembrane segment at 360 to 379 threads the bilayer; the sequence is LIPAVAVPVSLIGTFAAMYL. Residues 380 to 388 are Periplasmic-facing; sequence CGFSLNNLS. A helical transmembrane segment spans residues 389–411; it reads LMALTIATGFVVDDAIVVLENIA. The Cytoplasmic segment spans residues 412-430; sequence RHLEAGMKPLQAALQGTRE. The helical transmembrane segment at 431–453 threads the bilayer; it reads VGFTVISMSLSLVAVFLPLLLMG. Residues 454-467 are Periplasmic-facing; it reads GLPGRLLREFAVTL. The helical transmembrane segment at 468 to 490 threads the bilayer; sequence SVAIGISLVVSLTLTPMMCGWML. Over 491-852 the chain is Cytoplasmic; it reads KSSKPRTQPR…QVFQQTMNSQ (362 aa). Residues 853-875 traverse the membrane as a helical segment; it reads LILIVAAIATVYIVLGILYESYV. At 876-894 the chain is on the periplasmic side; sequence HPLTILSTLPSAGVGALLA. The helical transmembrane segment at 895–917 threads the bilayer; that stretch reads LELFNAPFSLIALIGIMLLIGIV. Residues 918-947 lie on the Cytoplasmic side of the membrane; sequence KKNAIMMVDFALEAQRSGGLTPEQAIFQAC. The chain crosses the membrane as a helical span at residues 948-970; sequence LLRFRPIMMTTLAALFGALPLVL. The Periplasmic segment spans residues 971–984; that stretch reads SGGDGSELRQPLGI. The chain crosses the membrane as a helical span at residues 985-1007; it reads TIVGGLVMSQLLTLYTTPVVYLF. Topologically, residues 1008–1026 are cytoplasmic; sequence FDRLRLRFSRKNSKPVVEI.

The protein belongs to the resistance-nodulation-cell division (RND) (TC 2.A.6) family. MdtC subfamily. Part of a tripartite efflux system composed of MdtA, MdtB and MdtC. MdtC forms a heteromultimer with MdtB.

The protein resides in the cell inner membrane. In Salmonella typhimurium (strain LT2 / SGSC1412 / ATCC 700720), this protein is Multidrug resistance protein MdtC.